The following is a 291-amino-acid chain: START domain-containing protein 10 (291 aa).

Met-1 carries the N-acetylmethionine modification. A disordered region spans residues 1-20 (MEKLAASTEPQGPRPVLGRE). Residues 14–224 (RPVLGRESVQ…MYKACLKYPE (211 aa)) form the START domain. N6-succinyllysine occurs at positions 94, 197, and 202. Residues Ser-253 and Ser-259 each carry the phosphoserine modification. The segment at 260 to 291 (LENIDESAVAESREERMGGAGGEGSDDDTSLT) is disordered. Ser-284 is subject to Phosphoserine; by CK2. Residue Ser-289 is modified to Phosphoserine.

Phosphorylation at Ser-284 by CK2 negatively regulates lipid transfer activity, possibly by decreasing membrane association.

The protein localises to the cell projection. Its subcellular location is the cilium. The protein resides in the flagellum. It is found in the cytoplasm. It localises to the membrane. May play metabolic roles in sperm maturation or fertilization. Phospholipid transfer protein that preferentially selects lipid species containing a palmitoyl or stearoyl chain on the sn-1 and an unsaturated fatty acyl chain (18:1 or 18:2) on the sn-2 position. Able to transfer phosphatidylcholine (PC) and phosphatidyetanolamline (PE) between membranes. This Homo sapiens (Human) protein is START domain-containing protein 10 (STARD10).